The chain runs to 487 residues: Structure-specific endonuclease subunit SLX1 (487 aa).

The 83-residue stretch at 27-109 (PFYACYLLRS…QKPELSRHLR (83 aa)) folds into the GIY-YIG domain. The disordered stretch occupies residues 44–69 (RTYVGSTPDPPRRIRQHNGELKQGAW). The SLX1-type zinc-finger motif lies at 262-328 (CHLCQERIAF…LPYQGLCPNC (67 aa)). Over residues 359-396 (KAEKAEKAEKAEKAEKAEKAEKAGRKVRQREMKTKKGD) the composition is skewed to basic and acidic residues. Disordered stretches follow at residues 359-407 (KAEK…QPES) and 433-475 (PARS…SEPE). The segment covering 397 to 407 (QSNGTVAQPES) has biased composition (polar residues). Positions 438–455 (KSKDVGGEGIRHSTHTDD) are enriched in basic and acidic residues. Positions 465 to 475 (ETEDESESEPE) are enriched in acidic residues.

Belongs to the SLX1 family. In terms of assembly, forms a heterodimer with SLX4. A divalent metal cation is required as a cofactor.

The protein localises to the nucleus. Its function is as follows. Catalytic subunit of the SLX1-SLX4 structure-specific endonuclease that resolves DNA secondary structures generated during DNA repair and recombination. Has endonuclease activity towards branched DNA substrates, introducing single-strand cuts in duplex DNA close to junctions with ss-DNA. This Cryptococcus neoformans var. neoformans serotype D (strain B-3501A) (Filobasidiella neoformans) protein is Structure-specific endonuclease subunit SLX1.